A 316-amino-acid polypeptide reads, in one-letter code: Phospho-N-acetylmuramoyl-pentapeptide-transferase (316 aa).

Helical transmembrane passes span 5–25 (IIFA…FFIP), 52–72 (TMGG…FSPW), 76–96 (LFIL…DDFL), 116–136 (FLLA…EIIV), 145–165 (LANF…NSVN), 172–192 (GLAA…ALFL), 195–212 (VTYG…LGFL), 221–241 (VFMG…VALL), 244–264 (LPLI…SVIL), and 296–316 (VVYS…YSLS).

This sequence belongs to the glycosyltransferase 4 family. MraY subfamily. Requires Mg(2+) as cofactor.

The protein resides in the cell membrane. It carries out the reaction UDP-N-acetyl-alpha-D-muramoyl-L-alanyl-gamma-D-glutamyl-meso-2,6-diaminopimeloyl-D-alanyl-D-alanine + di-trans,octa-cis-undecaprenyl phosphate = di-trans,octa-cis-undecaprenyl diphospho-N-acetyl-alpha-D-muramoyl-L-alanyl-D-glutamyl-meso-2,6-diaminopimeloyl-D-alanyl-D-alanine + UMP. It participates in cell wall biogenesis; peptidoglycan biosynthesis. Its function is as follows. Catalyzes the initial step of the lipid cycle reactions in the biosynthesis of the cell wall peptidoglycan: transfers peptidoglycan precursor phospho-MurNAc-pentapeptide from UDP-MurNAc-pentapeptide onto the lipid carrier undecaprenyl phosphate, yielding undecaprenyl-pyrophosphoryl-MurNAc-pentapeptide, known as lipid I. The protein is Phospho-N-acetylmuramoyl-pentapeptide-transferase of Caldanaerobacter subterraneus subsp. tengcongensis (strain DSM 15242 / JCM 11007 / NBRC 100824 / MB4) (Thermoanaerobacter tengcongensis).